Consider the following 164-residue polypeptide: B-phycoerythrin alpha chain (164 aa).

2 residues coordinate (2R,3E)-phycoerythrobilin: Cys82 and Cys139.

This sequence belongs to the phycobiliprotein family. As to quaternary structure, heteromer of 6 alpha, 6 beta and one gamma chain. Contains two covalently linked bilin chromophores.

The protein localises to the plastid. It localises to the chloroplast thylakoid membrane. Functionally, light-harvesting photosynthetic bile pigment-protein from the phycobiliprotein complex. The sequence is that of B-phycoerythrin alpha chain (cpeA) from Rhodella violacea (Red alga).